The primary structure comprises 1494 residues: DNA-directed RNA polymerase subunit beta' (1494 aa).

The Zn(2+) site is built by cysteine 67, cysteine 69, cysteine 82, and cysteine 85. 3 residues coordinate Mg(2+): aspartate 499, aspartate 501, and aspartate 503. Positions 868, 944, 951, and 954 each coordinate Zn(2+).

The protein belongs to the RNA polymerase beta' chain family. As to quaternary structure, the RNAP catalytic core consists of 2 alpha, 1 beta, 1 beta' and 1 omega subunit. When a sigma factor is associated with the core the holoenzyme is formed, which can initiate transcription. Requires Mg(2+) as cofactor. The cofactor is Zn(2+).

It carries out the reaction RNA(n) + a ribonucleoside 5'-triphosphate = RNA(n+1) + diphosphate. Functionally, DNA-dependent RNA polymerase catalyzes the transcription of DNA into RNA using the four ribonucleoside triphosphates as substrates. The polypeptide is DNA-directed RNA polymerase subunit beta' (Chlorobaculum parvum (strain DSM 263 / NCIMB 8327) (Chlorobium vibrioforme subsp. thiosulfatophilum)).